Here is a 291-residue protein sequence, read N- to C-terminus: ATP synthase subunit b 2 (291 aa).

A helical membrane pass occupies residues 2 to 22 (LIDGFTVVAQIVNFLILVWLL).

Belongs to the ATPase B chain family. F-type ATPases have 2 components, F(1) - the catalytic core - and F(0) - the membrane proton channel. F(1) has five subunits: alpha(3), beta(3), gamma(1), delta(1), epsilon(1). F(0) has three main subunits: a(1), b(2) and c(10-14). The alpha and beta chains form an alternating ring which encloses part of the gamma chain. F(1) is attached to F(0) by a central stalk formed by the gamma and epsilon chains, while a peripheral stalk is formed by the delta and b chains.

Its subcellular location is the cell inner membrane. Its function is as follows. F(1)F(0) ATP synthase produces ATP from ADP in the presence of a proton or sodium gradient. F-type ATPases consist of two structural domains, F(1) containing the extramembraneous catalytic core and F(0) containing the membrane proton channel, linked together by a central stalk and a peripheral stalk. During catalysis, ATP synthesis in the catalytic domain of F(1) is coupled via a rotary mechanism of the central stalk subunits to proton translocation. Functionally, component of the F(0) channel, it forms part of the peripheral stalk, linking F(1) to F(0). This Nitrosospira multiformis (strain ATCC 25196 / NCIMB 11849 / C 71) protein is ATP synthase subunit b 2.